The primary structure comprises 300 residues: GTPase Era (300 aa).

The region spanning 6 to 173 (KSGFVAIVGR…MDVLVEQMPE (168 aa)) is the Era-type G domain. The G1 stretch occupies residues 14 to 21 (GRPNVGKS). 14–21 (GRPNVGKS) contributes to the GTP binding site. The tract at residues 40–44 (QTTRN) is G2. Residues 61–64 (DTPG) are G3. Residues 61–65 (DTPGI) and 123–126 (NKID) each bind GTP. A G4 region spans residues 123 to 126 (NKID). The G5 stretch occupies residues 152-154 (ISA). Residues 204–281 (TRDEIPHSVA…YLELWVKVQK (78 aa)) form the KH type-2 domain.

It belongs to the TRAFAC class TrmE-Era-EngA-EngB-Septin-like GTPase superfamily. Era GTPase family. Monomer.

The protein localises to the cytoplasm. It localises to the cell membrane. Functionally, an essential GTPase that binds both GDP and GTP, with rapid nucleotide exchange. Plays a role in 16S rRNA processing and 30S ribosomal subunit biogenesis and possibly also in cell cycle regulation and energy metabolism. The protein is GTPase Era of Enterococcus faecalis (strain ATCC 700802 / V583).